Reading from the N-terminus, the 584-residue chain is Proteasome-associated ATPase (584 aa).

Residues 16–91 (EELASQVRLL…KEEVDRLAQP (76 aa)) are a coiled coil. Position 273–278 (273–278 (GCGKTL)) interacts with ATP. Positions 583 to 584 (YL) are docks into pockets in the proteasome alpha-ring.

The protein belongs to the AAA ATPase family. As to quaternary structure, homohexamer. Assembles into a hexameric ring structure that caps the 20S proteasome core. Strongly interacts with the prokaryotic ubiquitin-like protein Pup through a hydrophobic interface; the interacting region of ARC lies in its N-terminal coiled-coil domain. There is one Pup binding site per ARC hexamer ring. Upon ATP-binding, the C-terminus of ARC interacts with the alpha-rings of the proteasome core, possibly by binding to the intersubunit pockets.

It functions in the pathway protein degradation; proteasomal Pup-dependent pathway. ATPase which is responsible for recognizing, binding, unfolding and translocation of pupylated proteins into the bacterial 20S proteasome core particle. May be essential for opening the gate of the 20S proteasome via an interaction with its C-terminus, thereby allowing substrate entry and access to the site of proteolysis. Thus, the C-termini of the proteasomal ATPase may function like a 'key in a lock' to induce gate opening and therefore regulate proteolysis. The protein is Proteasome-associated ATPase of Nocardioides sp. (strain ATCC BAA-499 / JS614).